The chain runs to 291 residues: Energy-coupling factor transporter ATP-binding protein EcfA2 (291 aa).

Residues 3–246 (ITFKDVSYTY…PEWLTSKQLG (244 aa)) form the ABC transporter domain. ATP is bound at residue 40–47 (GHTGSGKS).

This sequence belongs to the ABC transporter superfamily. Energy-coupling factor EcfA family. Forms a stable energy-coupling factor (ECF) transporter complex composed of 2 membrane-embedded substrate-binding proteins (S component), 2 ATP-binding proteins (A component) and 2 transmembrane proteins (T component).

The protein localises to the cell membrane. Functionally, ATP-binding (A) component of a common energy-coupling factor (ECF) ABC-transporter complex. Unlike classic ABC transporters this ECF transporter provides the energy necessary to transport a number of different substrates. The chain is Energy-coupling factor transporter ATP-binding protein EcfA2 from Latilactobacillus sakei subsp. sakei (strain 23K) (Lactobacillus sakei subsp. sakei).